The sequence spans 266 residues: Glucosamine-6-phosphate deaminase (266 aa).

Catalysis depends on Asp72, which acts as the Proton acceptor; for enolization step. The active-site For ring-opening step is Asp141. His143 acts as the Proton acceptor; for ring-opening step in catalysis. Glu148 serves as the catalytic For ring-opening step.

This sequence belongs to the glucosamine/galactosamine-6-phosphate isomerase family. NagB subfamily. Homohexamer; trimer of disulfide-linked dimers.

The catalysed reaction is alpha-D-glucosamine 6-phosphate + H2O = beta-D-fructose 6-phosphate + NH4(+). The protein operates within amino-sugar metabolism; N-acetylneuraminate degradation; D-fructose 6-phosphate from N-acetylneuraminate: step 5/5. With respect to regulation, allosterically activated by N-acetylglucosamine 6-phosphate (GlcNAc6P). Functionally, catalyzes the reversible isomerization-deamination of glucosamine 6-phosphate (GlcN6P) to form fructose 6-phosphate (Fru6P) and ammonium ion. This is Glucosamine-6-phosphate deaminase from Escherichia coli O6:H1 (strain CFT073 / ATCC 700928 / UPEC).